The chain runs to 173 residues: Inorganic pyrophosphatase (173 aa).

Residues Lys-29, Arg-43, and Tyr-55 each contribute to the substrate site. Mg(2+)-binding residues include Asp-65, Asp-70, and Asp-102. Substrate is bound at residue Tyr-141.

The protein belongs to the PPase family. Homohexamer. The cofactor is Mg(2+).

It localises to the cytoplasm. The enzyme catalyses diphosphate + H2O = 2 phosphate + H(+). Its function is as follows. Catalyzes the hydrolysis of inorganic pyrophosphate (PPi) forming two phosphate ions. This chain is Inorganic pyrophosphatase, found in Gluconobacter oxydans (strain 621H) (Gluconobacter suboxydans).